Here is a 61-residue protein sequence, read N- to C-terminus: SPbeta prophage-derived uncharacterized protein YotK (61 aa).

The stretch at Ser7–Lys57 forms a coiled coil.

In Bacillus subtilis (strain 168), this protein is SPbeta prophage-derived uncharacterized protein YotK (yotK).